A 68-amino-acid polypeptide reads, in one-letter code: Protein SlyX homolog (68 aa).

It belongs to the SlyX family.

The sequence is that of Protein SlyX homolog from Brucella abortus (strain S19).